The primary structure comprises 518 residues: Putative transposase for insertion sequence IS408 (518 aa).

Residues 11 to 94 form the HTH IS408-type domain; sequence LKEVLRLKWA…PDYTALHREL (84 aa). The segment at residues 23–44 is a DNA-binding region (H-T-H motif); that stretch reads LTHRQISRAIGISVGAVSKFAA. The 196-residue stretch at 140 to 335 folds into the Integrase catalytic domain; sequence QQHRAGEKLF…LPVRRYEIAT (196 aa). Positions 496–518 are disordered; it reads LPTTPAEWRSPEHENVRGPDYYH. The segment covering 504-518 has biased composition (basic and acidic residues); that stretch reads RSPEHENVRGPDYYH.

It belongs to the transposase IS21/IS408/IS1162 family.

In terms of biological role, required for the transposition of the insertion element. The protein is Putative transposase for insertion sequence IS408 of Burkholderia multivorans (strain ATCC 17616 / 249).